The sequence spans 524 residues: Glutamyl-tRNA(Gln) amidotransferase subunit A (524 aa).

Residues Lys109 and Ser184 each act as charge relay system in the active site. Ser208 serves as the catalytic Acyl-ester intermediate.

The protein belongs to the amidase family. GatA subfamily. As to quaternary structure, heterotrimer of A, B and C subunits.

It carries out the reaction L-glutamyl-tRNA(Gln) + L-glutamine + ATP + H2O = L-glutaminyl-tRNA(Gln) + L-glutamate + ADP + phosphate + H(+). In terms of biological role, allows the formation of correctly charged Gln-tRNA(Gln) through the transamidation of misacylated Glu-tRNA(Gln) in organisms which lack glutaminyl-tRNA synthetase. The reaction takes place in the presence of glutamine and ATP through an activated gamma-phospho-Glu-tRNA(Gln). This chain is Glutamyl-tRNA(Gln) amidotransferase subunit A, found in Tropheryma whipplei (strain TW08/27) (Whipple's bacillus).